The sequence spans 554 residues: MEFAAFADRAEAIESESADTAITEAVTDLFRASGSDLSTLARFVQGRVFPAYESRTLDIGPRLCYEAIARAAGQNVSADDVEQRLADLGEIGAVAASYDLGGQQGLAAFGAGGGGDDALTVAELDDELRNLAAVDGSGSQGTKVDILFGLFSRCSSTEAGYLARLVLSEMRIGVGEGTVRDAAAAAFDVPVEAVERAVQVSNDYGMVAEVARDEGESGLATVTLEIGRPVQAMLAQAGTVAGALEDWDRAAVEWKYDGARVQVHFDGEDARLFSRNMEEVTDPLPEVVETVESTLDAPAILDGEVVAVDDGGDPLPFQEVLRRFRRKHDVAAAREDVAVRLHAFDCLHAAGEDLLDAALETRHDRLESLFPADSDVFSQMWLSDDAEEIESLEAEALAAGQEGIMLKDPTAAYSPGKRGKHWRKRKPDVETLDCVVTGAEWGEGRRANVLGSFELSVRTDDGYATVGNVATGITDEELDDLTERFEPYIRSEDGRDVVLDPAVVFEVGYEEIQASQSYASGYALRFPRFLSVREDKTPDSADSLARVERLAESQ.

Glu-253 is an ATP binding site. The active-site N6-AMP-lysine intermediate is Lys-255. ATP is bound by residues Arg-260, Arg-275, Glu-304, Phe-344, Arg-418, and Lys-424.

The protein belongs to the ATP-dependent DNA ligase family. Requires Mg(2+) as cofactor.

It catalyses the reaction ATP + (deoxyribonucleotide)n-3'-hydroxyl + 5'-phospho-(deoxyribonucleotide)m = (deoxyribonucleotide)n+m + AMP + diphosphate.. In terms of biological role, DNA ligase that seals nicks in double-stranded DNA during DNA replication, DNA recombination and DNA repair. In Haloarcula marismortui (strain ATCC 43049 / DSM 3752 / JCM 8966 / VKM B-1809) (Halobacterium marismortui), this protein is DNA ligase.